The following is a 50-amino-acid chain: Large ribosomal subunit protein bL33A (50 aa).

The protein belongs to the bacterial ribosomal protein bL33 family.

In Mycoplasmopsis pulmonis (strain UAB CTIP) (Mycoplasma pulmonis), this protein is Large ribosomal subunit protein bL33A (rpmG1).